Here is a 430-residue protein sequence, read N- to C-terminus: Tol-Pal system protein TolB (430 aa).

The first 21 residues, 1 to 21 (MKQALRVAFGFLILWASVLHA), serve as a signal peptide directing secretion.

This sequence belongs to the TolB family. In terms of assembly, the Tol-Pal system is composed of five core proteins: the inner membrane proteins TolA, TolQ and TolR, the periplasmic protein TolB and the outer membrane protein Pal. They form a network linking the inner and outer membranes and the peptidoglycan layer.

It localises to the periplasm. Functionally, part of the Tol-Pal system, which plays a role in outer membrane invagination during cell division and is important for maintaining outer membrane integrity. TolB occupies a key intermediary position in the Tol-Pal system because it communicates directly with both membrane-embedded components, Pal in the outer membrane and TolA in the inner membrane. In Shigella boydii serotype 4 (strain Sb227), this protein is Tol-Pal system protein TolB.